The sequence spans 92 residues: Sugar fermentation stimulation protein B (92 aa).

Positions 50 to 69 form a DNA-binding region, H-T-H motif; that stretch reads EMIIAKALGTDPWVIWPSRY.

It belongs to the ner transcriptional regulatory family.

Its function is as follows. This protein is involved in positive regulation of the metabolism of sugars. The protein is Sugar fermentation stimulation protein B (sfsB) of Escherichia coli O157:H7.